A 336-amino-acid polypeptide reads, in one-letter code: Ferrochelatase (336 aa).

Fe cation is bound by residues His206 and Glu287.

The protein belongs to the ferrochelatase family.

It localises to the cytoplasm. The catalysed reaction is heme b + 2 H(+) = protoporphyrin IX + Fe(2+). The protein operates within porphyrin-containing compound metabolism; protoheme biosynthesis; protoheme from protoporphyrin-IX: step 1/1. Its function is as follows. Catalyzes the ferrous insertion into protoporphyrin IX. The polypeptide is Ferrochelatase (Neisseria gonorrhoeae (strain ATCC 700825 / FA 1090)).